The primary structure comprises 466 residues: MAAISRVIDLFTSDQEYIGKTVRAQGWVRTKRDSKAGVSFIELNDGSCLRNLQVVADQGHPEYRQLLESITTGCAVMVEGSIAYSPGKGQTIELKADRITLYGTADPAVYPLQKKRHSFEFLRQIGHLRPRTNTIGAVSRVRNRLSYAIHQFFQDRGFYYIHTPIITASDCEGAGEMFRVTTLDAQNAPAKVPEEVYRADFFGKPAFLTVSGQLQAEIYALALGRVYTFGPTFRAENSNTSRHLAEFWMVEPEMAFCDLEGDLEIAQALIRHLIGVALQDCAEDLDFFTRFIEPTLRGTLETVAFSPFETVTYTEAVRILKESGENFEFPVEWGNDLQAEHERYLTEKVFRKPAAVIHFPRALKPFYMRVNDDGNTVAAMDILVPGTGEIIGGSQREERPDILVEQMRLKSVAPEDYKWYLDLREFGSVPHAGFGMGLERLVQFVTGLPNIREVIPFPRTPGHAEF.

It belongs to the class-II aminoacyl-tRNA synthetase family. Homodimer.

It is found in the cytoplasm. It catalyses the reaction tRNA(Asn) + L-asparagine + ATP = L-asparaginyl-tRNA(Asn) + AMP + diphosphate + H(+). This chain is Asparagine--tRNA ligase, found in Syntrophobacter fumaroxidans (strain DSM 10017 / MPOB).